The following is a 219-amino-acid chain: Ras-related protein Rab-3B (219 aa).

A2 bears the N-acetylalanine mark. GTP contacts are provided by S31, S32, V33, G34, K35, T36, S37, P49, and S53. Residue T36 participates in Mg(2+) binding. The Switch 1 signature appears at D45 to D58. Positions 54 and 77 each coordinate Mg(2+). The Switch 2 motif lies at T78–M96. G80 contributes to the GTP binding site. T86 carries the phosphothreonine modification. Residues N135, K136, D138, A166, and K167 each contribute to the GTP site. 2 positions are modified to phosphoserine: S188 and S190. Residues C217 and C219 are each lipidated (S-geranylgeranyl cysteine). Position 219 is a cysteine methyl ester (C219).

Belongs to the small GTPase superfamily. Rab family. As to quaternary structure, interacts with RPH3A and RPH3AL. Interacts with RIMS1. Interacts with RIMS2. The GTP-bound form interacts with GAS8/DRC4 (via coiled-coil domains). Interacts with GDI2, and CHM; phosphorylation at Thr-86 disrupts these interactions. Interacts with MADD (via uDENN domain); the GTP-bound form is preferred for interaction. Mg(2+) serves as cofactor. In terms of processing, phosphorylation of Thr-86 in the switch II region by LRRK2 prevents the association of RAB regulatory proteins, including CHM and RAB GDP dissociation inhibitor GDI2.

It localises to the cell membrane. Its subcellular location is the golgi apparatus. It catalyses the reaction GTP + H2O = GDP + phosphate + H(+). Regulated by guanine nucleotide exchange factors (GEFs) which promote the exchange of bound GDP for free GTP. Regulated by GTPase activating proteins (GAPs) which increase the GTP hydrolysis activity. Inhibited by GDP dissociation inhibitors (GDIs) which prevent Rab-GDP dissociation. In terms of biological role, the small GTPases Rab are key regulators of intracellular membrane trafficking, from the formation of transport vesicles to their fusion with membranes. Rabs cycle between an inactive GDP-bound form and an active GTP-bound form that is able to recruit to membranes different sets of downstream effectors directly responsible for vesicle formation, movement, tethering and fusion. This Rattus norvegicus (Rat) protein is Ras-related protein Rab-3B.